Reading from the N-terminus, the 104-residue chain is Class I hydrophobin 12 (104 aa).

Residues 1–25 (MFSKATLFFTAAVVIVAAGATPTTS) form the signal peptide. Cystine bridges form between Cys-27–Cys-85, Cys-34–Cys-79, Cys-35–Cys-67, and Cys-86–Cys-99.

It belongs to the fungal hydrophobin family. In terms of assembly, self-assembles to form functional amyloid fibrils called rodlets. Self-assembly into fibrillar rodlets occurs spontaneously at hydrophobic:hydrophilic interfaces and the rodlets further associate laterally to form amphipathic monolayers.

It is found in the secreted. The protein localises to the cell wall. Functionally, aerial growth, conidiation, and dispersal of filamentous fungi in the environment rely upon a capability of their secreting small amphipathic proteins called hydrophobins (HPBs) with low sequence identity. Class I can self-assemble into an outermost layer of rodlet bundles on aerial cell surfaces, conferring cellular hydrophobicity that supports fungal growth, development and dispersal; whereas Class II form highly ordered films at water-air interfaces through intermolecular interactions but contribute nothing to the rodlet structure. Hydph12 is a class I hydrophobin involved in the formation of mycelium knots. This chain is Class I hydrophobin 12, found in Pleurotus ostreatus (strain PC15) (Oyster mushroom).